The sequence spans 178 residues: Arginine repressor (178 aa).

Positions 1–21 (MSQAQENEHAGPAVPQTRTAR) are disordered.

Belongs to the ArgR family.

It is found in the cytoplasm. Its pathway is amino-acid biosynthesis; L-arginine biosynthesis [regulation]. In terms of biological role, regulates arginine biosynthesis genes. In Streptomyces avermitilis (strain ATCC 31267 / DSM 46492 / JCM 5070 / NBRC 14893 / NCIMB 12804 / NRRL 8165 / MA-4680), this protein is Arginine repressor.